Consider the following 655-residue polypeptide: Forkhead box protein O1 (655 aa).

Disordered regions lie at residues Met1–Ala63 and Gly116–Asn158. A Phosphothreonine; by PKB/AKT1 or PKB/AKT2 and SGK1 modification is found at Thr24. Residues Ser33 to Ala63 show a composition bias toward low complexity. Residues Pro120–Ala141 are compositionally biased toward pro residues. The segment at residues Ala159–Ser235 is a DNA-binding region (fork-head). DNA-binding regions lie at residues Asn211–Ser218 and Ser234–Trp237. A phosphoserine; by STK4/MST1 mark is found at Ser212, Ser218, Ser234, and Ser235. Residues Ser234–His344 form a disordered region. 2 positions are modified to N6-acetyllysine: Lys245 and Lys248. Ser249 bears the Phosphoserine; by CDK1 mark. An omega-N-methylarginine; by PRMT1 mark is found at Arg251 and Arg253. The short motif at Arg251–Arg253 is the Nuclear localization signal element. Ser256 bears the Phosphoserine; by PKB/AKT1 and SGK1 mark. 3 positions are modified to N6-acetyllysine: Lys262, Lys265, and Lys274. Basic residues predominate over residues Ala264 to Ala275. Residues Gly283 to Gln563 are sufficient for interaction with NLK. Phosphoserine is present on residues Ser287 and Ser298. Residues Asn309 to Gly326 are compositionally biased toward polar residues. Ser319 is modified (phosphoserine; by PKB/AKT1). Ser322 is subject to Phosphoserine; by CK1 and SGK1. The residue at position 325 (Ser325) is a Phosphoserine; by CK1. Phosphoserine; by DYRK1A is present on Ser329. Thr333 carries the post-translational modification Phosphothreonine. The interval Ser363 to Pro459 is required for interaction with RUNX2. Lys423 bears the N6-acetyllysine mark. The Required for interaction with SIRT1 motif lies at Leu462 to Leu466. A compositionally biased stretch (polar residues) spans Tyr507–Val534. The interval Tyr507–Arg537 is disordered.

In terms of assembly, interacts with LRPPRC. Interacts with RUNX2; the interaction inhibits RUNX2 transcriptional activity and mediates the IGF1/insulin-dependent BGLAP expression in osteoblasts Interacts with PPP2R1A; the interaction regulates the dephosphorylation of FOXO1 at Thr-24 and Ser-256 leading to its nuclear import. Interacts (acetylated form) with PPARG. Interacts with XBP1 isoform 2; this interaction is direct and leads to FOXO1 ubiquitination and degradation via the proteasome pathway. Interacts with NLK. Interacts with SIRT1; the interaction results in the deacetylation of FOXO1 leading to activation of FOXO1-mediated transcription of genes involved in DNA repair and stress resistance. Binds to CDK1. Interacts with the 14-3-3 proteins, YWHAG and YWHAZ; the interactions require insulin-stimulated phosphorylation on Thr-24, promote nuclear exit and loss of transcriptional activity. Interacts with SKP2; the interaction ubiquitinates FOXO1 leading to its proteasomal degradation. The interaction requires the presence of KRIT1. Interacts (via the C-terminal half) with ATF4 (via its DNA-binding domain); the interaction occurs in osteoblasts, regulates glucose homeostasis via suppression of beta-cell proliferation and subsequent decrease in insulin production. Interacts with PRMT1; the interaction methylates FOXO1, prevents PKB/AKT1 phosphorylation and retains FOXO1 in the nucleus. Interacts with EP300 and CREBBP; the interactions acetylate FOXO1. Interacts with SIRT2; the interaction is disrupted in response to oxidative stress or serum deprivation, leading to increased level of acetylated FOXO1, which promotes stress-induced autophagy by stimulating E1-like activating enzyme ATG7. Interacts (acetylated form) with ATG7; the interaction is increased in response to oxidative stress or serum deprivation and promotes the autophagic process leading to cell death. Interacts (via the Fork-head domain) with CEBPA; the interaction increases when FOXO1 is deacetylated. Interacts with WDFY2. Forms a complex with WDFY2 and AKT1. Interacts with CRY1. Interacts with PPIA/CYPA; the interaction promotes FOXO1 dephosphorylation, nuclear accumulation and transcriptional activity. Interacts with TOX4; FOXO1 is required for full induction of TOX4-dependent activity and the interaction is inhibited by insulin. Interacts (when phosphorylated on Ser-256) with STUB1/CHIP. In terms of processing, phosphorylation by NLK promotes nuclear export and inhibits the transcriptional activity. In response to growth factors, phosphorylation on Thr-24, Ser-256 and Ser-322 by PKB/AKT1 promotes nuclear export and inactivation of transactivational activity. Phosphorylation on Thr-24 is required for binding 14-3-3 proteins. Phosphorylation of Ser-256 decreases DNA-binding activity and promotes the phosphorylation of Thr-24 and Ser-319, permitting phosphorylation of Ser-322 and Ser-325, probably by CDK1, leading to nuclear exclusion and loss of function. Stress signals, such as response to oxygen or nitric oxide, attenuate the PKB/AKT1-mediated phosphorylation leading to nuclear retention. Phosphorylation of Ser-329 is independent of IGF1 and leads to reduced function. Dephosphorylated on Thr-24 and Ser-256 by PP2A in beta-cells under oxidative stress leading to nuclear retention. Phosphorylation of Ser-249 by CDK1 disrupts binding of 14-3-3 proteins leading to nuclear accumulation and has no effect on DNA-binding nor transcriptional activity. Phosphorylation by STK4/MST1 on Ser-212, upon oxidative stress, inhibits binding to 14-3-3 proteins and nuclear export. PPIA/CYPA promotes its dephosphorylation on Ser-256. Ubiquitinated by SKP2. Ubiquitination leads to proteasomal degradation. Ubiquitinated by STUB1/CHIP; when Ser-256 is phosphorylated. Post-translationally, methylation inhibits AKT1-mediated phosphorylation at Ser-256 and is increased by oxidative stress. In terms of processing, acetylated. Acetylation at Lys-262, Lys-265 and Lys-274 are necessary for autophagic cell death induction. Deacetylated by SIRT2 in response to oxidative stress or serum deprivation, thereby negatively regulating FOXO1-mediated autophagic cell death. Once in the nucleus, acetylated by CREBBP/EP300. Acetylation diminishes the interaction with target DNA and attenuates the transcriptional activity. It increases the phosphorylation at Ser-256. Deacetylation by SIRT1 results in reactivation of the transcriptional activity. Oxidative stress by hydrogen peroxide treatment appears to promote deacetylation and uncoupling of insulin-induced phosphorylation. By contrast, resveratrol acts independently of acetylation. Acetylated at Lys-423, promoting its localization to the nucleus and transcription factor activity. Deacetylation at Lys-423 by SIRT6, promotes its translocation into the cytoplasm, preventing its transcription factor activity. Deacetylation and subsequent inhibition by SIRT6 has different effects depending on cell types: it inhibits gluconeogenesis in hepatocytes, promotes glucose sensing in pancreatic beta-cells and regulates lipid catabolism in brown adipocytes. Expressed in umbilical endothelial cells (at protein level). Abundantly expressed in skeletal muscle and ovary, with lower expression in the heart, placenta, lung, liver, pancreas, spleen, testis and small intestine. Weakly expressed in the brain, thymus, prostate and mucosal lining of the colon.

It is found in the cytoplasm. Its subcellular location is the nucleus. Functionally, transcription factor that is the main target of insulin signaling and regulates metabolic homeostasis in response to oxidative stress. Binds to the insulin response element (IRE) with consensus sequence 5'-TT[G/A]TTTTG-3' and the related Daf-16 family binding element (DBE) with consensus sequence 5'-TT[G/A]TTTAC-3'. Activity suppressed by insulin. Main regulator of redox balance and osteoblast numbers and controls bone mass. Orchestrates the endocrine function of the skeleton in regulating glucose metabolism. Also acts as a key regulator of chondrogenic commitment of skeletal progenitor cells in response to lipid availability: when lipids levels are low, translocates to the nucleus and promotes expression of SOX9, which induces chondrogenic commitment and suppresses fatty acid oxidation. Acts synergistically with ATF4 to suppress osteocalcin/BGLAP activity, increasing glucose levels and triggering glucose intolerance and insulin insensitivity. Also suppresses the transcriptional activity of RUNX2, an upstream activator of osteocalcin/BGLAP. Acts as an inhibitor of glucose sensing in pancreatic beta cells by acting as a transcription repressor and suppressing expression of PDX1. In hepatocytes, promotes gluconeogenesis by acting together with PPARGC1A and CEBPA to activate the expression of genes such as IGFBP1, G6PC1 and PCK1. Also promotes gluconeogenesis by directly promoting expression of PPARGC1A and G6PC1. Important regulator of cell death acting downstream of CDK1, PKB/AKT1 and STK4/MST1. Promotes neural cell death. Mediates insulin action on adipose tissue. Regulates the expression of adipogenic genes such as PPARG during preadipocyte differentiation and, adipocyte size and adipose tissue-specific gene expression in response to excessive calorie intake. Regulates the transcriptional activity of GADD45A and repair of nitric oxide-damaged DNA in beta-cells. Required for the autophagic cell death induction in response to starvation or oxidative stress in a transcription-independent manner. Mediates the function of MLIP in cardiomyocytes hypertrophy and cardiac remodeling. Positive regulator of apoptosis in cardiac smooth muscle cells as a result of its transcriptional activation of pro-apoptotic genes. Regulates endothelial cell (EC) viability and apoptosis in a PPIA/CYPA-dependent manner via transcription of CCL2 and BCL2L11 which are involved in EC chemotaxis and apoptosis. This Homo sapiens (Human) protein is Forkhead box protein O1.